The primary structure comprises 99 residues: uncharacterized protein (99 aa).

Positions Met1–Gly17 are cleaved as a signal peptide. Cys18 is lipidated: N-palmitoyl cysteine. The S-diacylglycerol cysteine moiety is linked to residue Cys18.

It localises to the cell membrane. This is an uncharacterized protein from Escherichia coli (strain UTI89 / UPEC).